The primary structure comprises 439 residues: Histidinol dehydrogenase (439 aa).

Residues Tyr125, Gln187, and Asn210 each contribute to the NAD(+) site. Thr233, Gln255, and His258 together coordinate substrate. Zn(2+) contacts are provided by Gln255 and His258. Active-site proton acceptor residues include Glu323 and His324. Substrate-binding residues include His324, Asp357, Glu411, and His416. Asp357 is a Zn(2+) binding site. His416 lines the Zn(2+) pocket.

The protein belongs to the histidinol dehydrogenase family. It depends on Zn(2+) as a cofactor.

The catalysed reaction is L-histidinol + 2 NAD(+) + H2O = L-histidine + 2 NADH + 3 H(+). It functions in the pathway amino-acid biosynthesis; L-histidine biosynthesis; L-histidine from 5-phospho-alpha-D-ribose 1-diphosphate: step 9/9. Its function is as follows. Catalyzes the sequential NAD-dependent oxidations of L-histidinol to L-histidinaldehyde and then to L-histidine. The polypeptide is Histidinol dehydrogenase (Symbiobacterium thermophilum (strain DSM 24528 / JCM 14929 / IAM 14863 / T)).